The chain runs to 522 residues: Terpineol synthase, chloroplastic (522 aa).

Positions 242, 279, 283, 414, and 417 each coordinate (2E)-geranyl diphosphate. 2 residues coordinate Mg(2+): Asp-279 and Asp-283. A DDXXD motif motif is present at residues 279-283 (DDVYD). Mg(2+) is bound by residues Asn-417, Thr-421, and Glu-425.

It belongs to the terpene synthase family. Tpsb subfamily. Monomer. Mg(2+) is required as a cofactor. It depends on Mn(2+) as a cofactor. As to expression, confined to flowers.

The protein localises to the plastid. It localises to the chloroplast. The enzyme catalyses (2E)-geranyl diphosphate + H2O = (S)-alpha-terpineol + diphosphate. It carries out the reaction (2E)-geranyl diphosphate = sabinene + diphosphate. It catalyses the reaction (2E)-geranyl diphosphate = beta-myrcene + diphosphate. The catalysed reaction is (2E)-geranyl diphosphate = limonene + diphosphate. The enzyme catalyses (2E)-geranyl diphosphate + H2O = 1,8-cineole + diphosphate. It carries out the reaction (2E)-geranyl diphosphate = alpha-pinene + diphosphate. It participates in secondary metabolite biosynthesis; terpenoid biosynthesis. Monoterpene synthase (TPS) involved in the biosynthesis of monoterpene natural products of the 'cineole cassette', volatile compounds present in floral scent. Catalyzes the conversion of (2E)-geranyl diphosphate (GPP) into alpha-terpineol and, as minor products, sabinene, beta-myrcene, limonene, alpha-pinene and 1,8-cineole. The sequence is that of Terpineol synthase, chloroplastic from Nicotiana langsdorffii (Langsdorff's tobacco).